Reading from the N-terminus, the 366-residue chain is tRNA/tmRNA (uracil-C(5))-methyltransferase (366 aa).

The S-adenosyl-L-methionine site is built by glutamine 187, tyrosine 215, asparagine 220, glutamate 236, and aspartate 297. Cysteine 322 acts as the Nucleophile in catalysis. The active-site Proton acceptor is the glutamate 356.

Belongs to the class I-like SAM-binding methyltransferase superfamily. RNA M5U methyltransferase family. TrmA subfamily.

It carries out the reaction uridine(54) in tRNA + S-adenosyl-L-methionine = 5-methyluridine(54) in tRNA + S-adenosyl-L-homocysteine + H(+). The catalysed reaction is uridine(341) in tmRNA + S-adenosyl-L-methionine = 5-methyluridine(341) in tmRNA + S-adenosyl-L-homocysteine + H(+). Functionally, dual-specificity methyltransferase that catalyzes the formation of 5-methyluridine at position 54 (m5U54) in all tRNAs, and that of position 341 (m5U341) in tmRNA (transfer-mRNA). The protein is tRNA/tmRNA (uracil-C(5))-methyltransferase of Marinomonas sp. (strain MWYL1).